We begin with the raw amino-acid sequence, 343 residues long: Palmitoyltransferase ZDHHC4 (343 aa).

Topologically, residues 1–2 (MD) are lumenal. A helical transmembrane segment spans residues 3-23 (FLVLFSFYLAFLLICVIMICI). Over 24–67 (FTKSQRLKAVVLGGAQVCARVTPQCFQRAVQTLLHQLFHTRHPA) the chain is Cytoplasmic. A helical membrane pass occupies residues 68 to 88 (FLALHLLLQGLVYAEYTYEVF). Topologically, residues 89–95 (SYCRELE) are lumenal. A helical membrane pass occupies residues 96-116 (FSLPCLLLPYVLLSVNLVFFT). Residues 117–193 (LTCSTNPGTI…NCIGAWNTGY (77 aa)) are Cytoplasmic-facing. Residues 149-199 (SRCSTCDLRKPARSKHCRVCDRCVHRFDHHCVWVNNCIGAWNTGYFLIYLL) form the DHHC domain. Cys-179 functions as the S-palmitoyl cysteine intermediate in the catalytic mechanism. The chain crosses the membrane as a helical span at residues 194–214 (FLIYLLTLTASAATIAILSAA). Residues 215-255 (FLLRLVAVSNLYQETYLDDLGRFQAVDTGFLIQHLFLAFPR) are Lumenal-facing. The helical transmembrane segment at 256 to 276 (IIFLLGFVIVLSLLLAGYLCF) threads the bilayer. Topologically, residues 277–343 (ALYLAATNQT…ATPSYKKKKR (67 aa)) are cytoplasmic. Positions 340–343 (KKKR) match the Di-lysine motif motif.

The protein belongs to the DHHC palmitoyltransferase family. Interacts with CPT1A.

Its subcellular location is the endoplasmic reticulum membrane. The protein resides in the golgi apparatus membrane. The protein localises to the cell membrane. The enzyme catalyses L-cysteinyl-[protein] + hexadecanoyl-CoA = S-hexadecanoyl-L-cysteinyl-[protein] + CoA. Functionally, palmitoyltransferase that could catalyze the addition of palmitate onto protein substrates including the D(2) dopamine receptor DRD2, GSK3B or MAVS. Mediates GSK3B palmitoylation to prevent its AKT1-mediated phosphorylation leading to activation of the STAT3 signaling pathway. Also catalyzes MAVS palmitoylation which promotes its stabilization and activation by inhibiting 'Lys-48'- but facilitating 'Lys-63'-linked ubiquitination. This is Palmitoyltransferase ZDHHC4 from Rattus norvegicus (Rat).